A 349-amino-acid chain; its full sequence is MKSVLYSYILFLSCIIINGRDVTPYAPSNGKCKDNEYKRHNLCCLSCPPGTYASRLCDSKTNTQCTPCGSGTFTSRNNHLPACLSCNGRCDSNQVETRSCNTTHNRICECSPGYYCILKGSSGCKACVSQTKCGIGYGVSGHTSAGDVICSPCGLGTYSRTVSSADKCEPVPSNTFNYIDVEINLYPVNDTSCTRTTTTGISESISTSELTITMNHKDCDPVFREEYFSVLNKVATSGFFTGENRYQNISKVCTLNFEIKCNNKGSSSKQLTKAKNDDGIMPHSETVTLVGDCLSSVDIYILYSNTNTQDYETDTISYHAGNVLDVDSHMPGSCDIHKLITNSKPTHFL.

The first 19 residues, 1-19 (MKSVLYSYILFLSCIIING), serve as a signal peptide directing secretion. TNFR-Cys repeat units follow at residues 31-65 (KCKD…NTQC) and 67-108 (PCGS…NRIC). Intrachain disulfides connect Cys-32/Cys-43, Cys-44/Cys-57, Cys-47/Cys-65, Cys-68/Cys-83, Cys-86/Cys-100, and Cys-90/Cys-108. Residues Asn-101, Asn-189, and Asn-248 are each glycosylated (N-linked (GlcNAc...) asparagine; by host).

The protein belongs to the orthopoxvirus OPG002 family.

Its function is as follows. Inhibits host immune defense by binding to host TNF and various chemokines in the extracellular space. Binds host CC chemokines (beta chemokines) and CXC chemokines (alpha chemokines). This is Soluble TNF receptor II (OPG002) from Camelus.